Reading from the N-terminus, the 107-residue chain is Stellacyanin (107 aa).

Positions 1–105 (TVYTVGDSAG…GQKVHINVTV (105 aa)) constitute a Phytocyanin domain. N28 carries an N-linked (GlcNAc...) asparagine glycan. Residue H46 participates in Cu cation binding. Cysteines 59 and 93 form a disulfide. N60 carries N-linked (GlcNAc...) asparagine glycosylation. Residues C87, H92, and Q97 each contribute to the Cu cation site. N102 is a glycosylation site (N-linked (GlcNAc...) asparagine).

The protein is Stellacyanin of Toxicodendron vernicifluum (Japanese lacquer tree).